The sequence spans 970 residues: Longitudinals lacking protein, isoforms F/I/K/T (970 aa).

The BTB domain maps to 32–97 (VDCTLAAEGK…MYRGEVNISQ (66 aa)). Disordered regions lie at residues 115 to 200 (LSDN…SSVL), 228 to 340 (SSGP…ASAS), 447 to 468 (DAQQ…EGAQ), and 790 to 843 (QTVH…LQDD). 4 stretches are compositionally biased toward low complexity: residues 162–175 (SGDV…SSSP), 228–251 (SSGP…LTST), 263–293 (TSST…QTTS), and 329–340 (NSATGPNPASAS). Composition is skewed to polar residues over residues 447–456 (DAQQRDPQAS) and 808–818 (QLQTHHIQTVV). The span at 819–828 (QSSSGQQQHD) shows a compositional bias: low complexity. A C2H2-type 1; degenerate zinc finger spans residues 903–925 (YVCRHCGKKYRWKSTLRRHENVE). A C2H2-type 2 zinc finger spans residues 933–955 (HPCPYCSYKAKQRGNLGVHVRKH).

In terms of tissue distribution, by stage 11, isoform F is expressed throughout the mesoderm whereas isoform T, and at low levels isoform I, is expressed throughout the ectoderm. Isoform K is expressed in both mesoderm and ectoderm. Expression becomes restricted during later stages; starting from stage 14 to 15, isoform F is expressed in the gut. Isoform I is expressed in the CNS. Isoform I and isoform F show expression in the epithelium starting at stage 14, though for isoform I the CNS expression remains predominant. Expression is also seen in specific types of cells in the embryo; isoform K is expressed in the ventral furrow at stage 5 and in a dynamic pattern in the ventral neurogenic region starting at stage 7. Isoform T is expressed around the tracheal pits at stage 11. Isoform F shows transient enrichment in a dorsal cell layer in the CNS at stages 13 and 14.

It is found in the nucleus. In terms of biological role, putative transcription factor required for axon growth and guidance in the central and peripheral nervous systems. Repels CNS axons away from the midline by promoting the expression of the midline repellent sli and its receptor robo. This chain is Longitudinals lacking protein, isoforms F/I/K/T, found in Drosophila melanogaster (Fruit fly).